A 664-amino-acid chain; its full sequence is Chaperone protein DnaK (664 aa).

Position 201 is a phosphothreonine; by autocatalysis (threonine 201). Disordered regions lie at residues 516 to 538 (DAEKHKEEDKKRREASDARNEAD) and 578 to 664 (APVE…KPND). Over residues 578-592 (APVEKIKDASEELSR) the composition is skewed to basic and acidic residues. 2 stretches are compositionally biased toward low complexity: residues 600-617 (AMQSQSASAAASSAANAQ) and 638-649 (AGNSASSNSNNE).

The protein belongs to the heat shock protein 70 family.

Functionally, acts as a chaperone. The protein is Chaperone protein DnaK of Chlamydia caviae (strain ATCC VR-813 / DSM 19441 / 03DC25 / GPIC) (Chlamydophila caviae).